The primary structure comprises 175 residues: Ribosome maturation factor RimM (175 aa).

Positions 96–175 constitute a PRC barrel domain; the sequence is DGDYYWKDLI…IIKVDWDPEF (80 aa).

This sequence belongs to the RimM family. As to quaternary structure, binds ribosomal protein uS19.

The protein localises to the cytoplasm. In terms of biological role, an accessory protein needed during the final step in the assembly of 30S ribosomal subunit, possibly for assembly of the head region. Essential for efficient processing of 16S rRNA. May be needed both before and after RbfA during the maturation of 16S rRNA. It has affinity for free ribosomal 30S subunits but not for 70S ribosomes. The protein is Ribosome maturation factor RimM of Baumannia cicadellinicola subsp. Homalodisca coagulata.